A 292-amino-acid polypeptide reads, in one-letter code: MAISAQQVKELRERSGAGMMECKTVLTEAEGDMEAAIDLLRARGLAKADKKASRVAAEGVIVTALSEDQKRGVVLEVNCETDFVAKNEDFLALAKDCAGQALAQGLKDAEALLADAGVEERRKGLVSKLGENISLRRLQHLQVMDGVIGAYVHGSRIGVLVALEGQAATSELGRDVAMHVAAARPEVIHPGEVSPERLNREKEILITQAADSGKPADIIEKMISGRLNKLLNEIALTGQPFVKDPDRSVGQLIQSFPGVEVLEFVRFEVGEGIEKAPTADFATEVMAQVRGS.

The segment at 81 to 84 (TDFV) is involved in Mg(2+) ion dislocation from EF-Tu.

It belongs to the EF-Ts family.

The protein resides in the cytoplasm. Functionally, associates with the EF-Tu.GDP complex and induces the exchange of GDP to GTP. It remains bound to the aminoacyl-tRNA.EF-Tu.GTP complex up to the GTP hydrolysis stage on the ribosome. This chain is Elongation factor Ts, found in Acidithiobacillus ferrooxidans (strain ATCC 23270 / DSM 14882 / CIP 104768 / NCIMB 8455) (Ferrobacillus ferrooxidans (strain ATCC 23270)).